The following is a 334-amino-acid chain: Malate dehydrogenase, mitochondrial (334 aa).

The N-terminal 17 residues, 1–17, are a transit peptide targeting the mitochondrion; the sequence is MLSRVAKRAFSSTVANP. NAD(+) contacts are provided by residues 24–30 and D50; that span reads GAGGGIG. Residues R99 and R105 each contribute to the substrate site. NAD(+) is bound by residues N112 and 135–137; that span reads ISN. N137 and R171 together coordinate substrate. S177 bears the Phosphoserine mark. Catalysis depends on H195, which acts as the Proton acceptor. At T199 the chain carries Phosphothreonine. Residue M245 participates in NAD(+) binding.

This sequence belongs to the LDH/MDH superfamily. MDH type 1 family. In terms of assembly, homodimer.

The protein resides in the mitochondrion matrix. The enzyme catalyses (S)-malate + NAD(+) = oxaloacetate + NADH + H(+). This is Malate dehydrogenase, mitochondrial (MDH1) from Saccharomyces cerevisiae (strain ATCC 204508 / S288c) (Baker's yeast).